We begin with the raw amino-acid sequence, 462 residues long: Stabilizer of axonemal microtubules 1 (462 aa).

Mn regions lie at residues 30-64 (KPCFFSEYTEKYPTYLSYVPRESFKPKLEYQKVNI), 65-97 (PMEGLSTTKRDFGTFNIVPVKHHLPEKATPIQD), 98-131 (EMDFLTTYNQHYNYCPANRVNPIKPRDNKHQCND), 132-165 (KMECVPTYKADYLPWNQQKRSSIRPPQSYRPASC), 166-199 (RFDHRTTHQDDYPIKNPVDTVSYKPPHGPKLCNI), 200-232 (PLESMTSYKSSYVAHPMEKRCVYEGEKYKPSEV), 233-266 (PFDSLTTHKDSYRGLIGEPAKTWKPAPNHPGLDI), 267-299 (PFPSNTEFREKFQPWPTPKIVPKESIAYIPPEG), 300-332 (KMDLLTTVQADYKCPNGVPAQSCRPVIHLKKSD), 333-366 (RFESSTTNREDFKHWANIRREPVKPNHQLKFSDE), 367-400 (PMEYMTTNRAHYVPHAPANTKSCKPTWSGPRVNI), and 401-434 (PLEGQTTYSTSFTPKEIQRCPASYPEPPGYIFDE).

This sequence belongs to the FAM154 family. As to quaternary structure, associates with microtubules via the Mn regions.

It is found in the cytoplasm. The protein localises to the cytoskeleton. It localises to the microtubule organizing center. The protein resides in the centrosome. Its subcellular location is the centriole. It is found in the cilium basal body. The protein localises to the cilium axoneme. In terms of biological role, may play a role in the regulation of cilium length. Stabilizes microtubules at low temperature. This is Stabilizer of axonemal microtubules 1 (Saxo1) from Rattus norvegicus (Rat).